The sequence spans 222 residues: Peroxiredoxin (222 aa).

In terms of domain architecture, Thioredoxin spans 7–163 (PRLGEPAPAF…VIRLVDALQT (157 aa)). Cys-49 acts as the Cysteine sulfenic acid (-SOH) intermediate in catalysis. Residue Arg-126 coordinates substrate. An intrachain disulfide couples Cys-212 to Cys-218.

Belongs to the peroxiredoxin family. Prx6 subfamily. Homodecamer. Pentamer of dimers that assemble into a ring structure.

The protein localises to the cytoplasm. The catalysed reaction is a hydroperoxide + [thioredoxin]-dithiol = an alcohol + [thioredoxin]-disulfide + H2O. In terms of biological role, thiol-specific peroxidase that catalyzes the reduction of hydrogen peroxide and organic hydroperoxides to water and alcohols, respectively. Plays a role in cell protection against oxidative stress by detoxifying peroxides. The protein is Peroxiredoxin of Aquifex aeolicus (strain VF5).